The sequence spans 332 residues: Glycerol-3-phosphate dehydrogenase [NAD(P)+] (332 aa).

The NADPH site is built by Trp-11, Arg-30, and Lys-108. The sn-glycerol 3-phosphate site is built by Lys-108, Gly-137, and Ser-139. Residue Ala-141 participates in NADPH binding. Sn-glycerol 3-phosphate contacts are provided by Lys-192, Asp-245, Ser-255, Arg-256, and Asn-257. Lys-192 acts as the Proton acceptor in catalysis. Arg-256 contacts NADPH. NADPH is bound by residues Val-280 and Glu-282.

This sequence belongs to the NAD-dependent glycerol-3-phosphate dehydrogenase family.

The protein localises to the cytoplasm. It carries out the reaction sn-glycerol 3-phosphate + NAD(+) = dihydroxyacetone phosphate + NADH + H(+). The catalysed reaction is sn-glycerol 3-phosphate + NADP(+) = dihydroxyacetone phosphate + NADPH + H(+). The protein operates within membrane lipid metabolism; glycerophospholipid metabolism. Catalyzes the reduction of the glycolytic intermediate dihydroxyacetone phosphate (DHAP) to sn-glycerol 3-phosphate (G3P), the key precursor for phospholipid synthesis. The sequence is that of Glycerol-3-phosphate dehydrogenase [NAD(P)+] from Burkholderia cenocepacia (strain ATCC BAA-245 / DSM 16553 / LMG 16656 / NCTC 13227 / J2315 / CF5610) (Burkholderia cepacia (strain J2315)).